A 188-amino-acid chain; its full sequence is Single-stranded DNA-binding protein DdrB (188 aa).

A disordered region spans residues 140–188 (YAVPGGAAGNGQGRPAPQGQPAQARPQATAARPAARPPVQPGQEEETPF). The span at 152-173 (GRPAPQGQPAQARPQATAARPA) shows a compositional bias: low complexity.

Homopentamer arranged in a ring-structure; DNA binds between subunits and along the top of the ring. The pentamers self-associate to coat ssDNA in higher-ordered structures; oligomerization facilitates the assembly of extended nucleoprotein complexes. Self-assembly does not however require ssDNA-binding. Interacts with SSB.

Its function is as follows. ssDNA-binding protein that contributes to the ionizing radiation resistance of D.radiodurans. Plays a role in DNA repair and genome reconstitution in a RecA-independent process. Required for recovery from severe genomic fragmentation as a result of exposure to severe levels of ionizing radiation. Binds ssDNA but not dsDNA. Stimulates annealing of complementary ssDNA. Does not complement an ssb disruption. The chain is Single-stranded DNA-binding protein DdrB (ddrB) from Deinococcus radiodurans (strain ATCC 13939 / DSM 20539 / JCM 16871 / CCUG 27074 / LMG 4051 / NBRC 15346 / NCIMB 9279 / VKM B-1422 / R1).